The sequence spans 340 residues: Methionine import ATP-binding protein MetN (340 aa).

The ABC transporter domain maps to 8 to 246 (ISVKNLNKEI…PYSSITEELF (239 aa)). 40–47 (GHSGSGKS) lines the ATP pocket.

The protein belongs to the ABC transporter superfamily. Methionine importer (TC 3.A.1.24) family. In terms of assembly, the complex is composed of two ATP-binding proteins (MetN), two transmembrane proteins (MetI) and a solute-binding protein (MetQ).

The protein resides in the cell inner membrane. The enzyme catalyses L-methionine(out) + ATP + H2O = L-methionine(in) + ADP + phosphate + H(+). The catalysed reaction is D-methionine(out) + ATP + H2O = D-methionine(in) + ADP + phosphate + H(+). In terms of biological role, part of the ABC transporter complex MetNIQ involved in methionine import. Responsible for energy coupling to the transport system. This chain is Methionine import ATP-binding protein MetN, found in Chlamydia felis (strain Fe/C-56) (Chlamydophila felis).